The primary structure comprises 420 residues: Putative movement protein (420 aa).

Low complexity-rich tracts occupy residues 1-18 (MPLT…TSFS) and 30-59 (TSCS…GSCP). Disordered stretches follow at residues 1–77 (MPLT…TARP), 137–181 (SMSR…SARS), 195–219 (RPKT…STRT), 235–281 (IMSE…RPPP), 327–370 (PSAG…RPIQ), and 396–420 (LPPP…QPWP). The span at 60-69 (KTPPGTPPLP) shows a compositional bias: pro residues. Residues 137–157 (SMSRRATQPPTTRSRVRPSTG) show a composition bias toward polar residues. A compositionally biased stretch (low complexity) spans 158–181 (SRPPVSPLVTSSSPSPFSTLSARS). Polar residues predominate over residues 253–263 (GLRSASLSTAG). A compositionally biased stretch (low complexity) spans 327-348 (PSAGSSPFTPTVSGCSASTSSA).

Functionally, cell-to-cell movement. The sequence is that of Putative movement protein from Maize rayado fino virus (isolate Costa Rica/Guapiles) (MRFV).